We begin with the raw amino-acid sequence, 212 residues long: ATP-dependent dethiobiotin synthetase BioD (212 aa).

12–17 (DCGKTF) contributes to the ATP binding site. Thr-16 serves as a coordination point for Mg(2+). The active site involves Lys-33. Ser-37 contacts substrate. ATP-binding positions include Asp-50, 110-113 (EGAG), and 170-171 (NC). Mg(2+)-binding residues include Asp-50 and Glu-110.

The protein belongs to the dethiobiotin synthetase family. As to quaternary structure, homodimer. It depends on Mg(2+) as a cofactor.

The protein localises to the cytoplasm. The catalysed reaction is (7R,8S)-7,8-diammoniononanoate + CO2 + ATP = (4R,5S)-dethiobiotin + ADP + phosphate + 3 H(+). It participates in cofactor biosynthesis; biotin biosynthesis; biotin from 7,8-diaminononanoate: step 1/2. Catalyzes a mechanistically unusual reaction, the ATP-dependent insertion of CO2 between the N7 and N8 nitrogen atoms of 7,8-diaminopelargonic acid (DAPA, also called 7,8-diammoniononanoate) to form a ureido ring. The protein is ATP-dependent dethiobiotin synthetase BioD of Legionella pneumophila (strain Corby).